Consider the following 926-residue polypeptide: Probable zinc protease PqqL (926 aa).

His-79 lines the Zn(2+) pocket. Glu-82 (proton acceptor) is an active-site residue. The Zn(2+) site is built by His-83 and Glu-159.

This sequence belongs to the peptidase M16 family. Requires Zn(2+) as cofactor.

This is Probable zinc protease PqqL (pqqL) from Haemophilus influenzae (strain ATCC 51907 / DSM 11121 / KW20 / Rd).